We begin with the raw amino-acid sequence, 121 residues long: Large ribosomal subunit protein bL12 (121 aa).

This sequence belongs to the bacterial ribosomal protein bL12 family. As to quaternary structure, homodimer. Part of the ribosomal stalk of the 50S ribosomal subunit. Forms a multimeric L10(L12)X complex, where L10 forms an elongated spine to which 2 to 4 L12 dimers bind in a sequential fashion. Binds GTP-bound translation factors.

In terms of biological role, forms part of the ribosomal stalk which helps the ribosome interact with GTP-bound translation factors. Is thus essential for accurate translation. The protein is Large ribosomal subunit protein bL12 of Aeromonas hydrophila subsp. hydrophila (strain ATCC 7966 / DSM 30187 / BCRC 13018 / CCUG 14551 / JCM 1027 / KCTC 2358 / NCIMB 9240 / NCTC 8049).